Consider the following 593-residue polypeptide: Proline dehydrogenase 1, mitochondrial (593 aa).

Residues 24–44 (PAAREQPAAGPGAEPVCGPAE) are disordered. Lys368 and Lys479 each carry N6-acetyllysine.

It belongs to the proline oxidase family. The cofactor is FAD.

It localises to the mitochondrion matrix. It catalyses the reaction L-proline + a quinone = (S)-1-pyrroline-5-carboxylate + a quinol + H(+). The protein operates within amino-acid degradation; L-proline degradation into L-glutamate; L-glutamate from L-proline: step 1/2. In terms of biological role, converts proline to delta-1-pyrroline-5-carboxylate. This chain is Proline dehydrogenase 1, mitochondrial, found in Bos taurus (Bovine).